The chain runs to 203 residues: MSSQIKLTKNSYRAEKQKLNLLGMYLPTLKLKKALLQAEVQSAMRSAAESMAANEQARDRMHAFAELFSIPLYTDAVEQCFSIDIFEKDVENIAGVEVPLLKRVVLTSLEYSLLDTPIWIDSLIASAKEYVLSKIYAENAQERLRLLEEELRRVSIRVNLFEKKLIPTTSQTIKKIAIFLSDRSITDVGQMKMAKKKIQQHKE.

The protein belongs to the V-ATPase D subunit family.

Functionally, produces ATP from ADP in the presence of a proton gradient across the membrane. The protein is V-type ATP synthase subunit D (atpD) of Chlamydia muridarum (strain MoPn / Nigg).